Reading from the N-terminus, the 375-residue chain is Protein RecA (375 aa).

The interval 1-20 is disordered; the sequence is MPAEMKSAASGSDPRSSGER. 79–86 contributes to the ATP binding site; it reads GPESSGKT.

The protein belongs to the RecA family.

It localises to the cytoplasm. Can catalyze the hydrolysis of ATP in the presence of single-stranded DNA, the ATP-dependent uptake of single-stranded DNA by duplex DNA, and the ATP-dependent hybridization of homologous single-stranded DNAs. It interacts with LexA causing its activation and leading to its autocatalytic cleavage. This chain is Protein RecA, found in Parasynechococcus marenigrum (strain WH8102).